We begin with the raw amino-acid sequence, 266 residues long: Outer kinetochore KNL1 complex subunit ZWINT (266 aa).

The tract at residues 95–115 is disordered; that stretch reads DQNPDALASEDTSRQKATETK. Residues 105–115 show a composition bias toward basic and acidic residues; the sequence is DTSRQKATETK. A coiled-coil region spans residues 136–237; it reads LSEALPQVKE…QRNQSYLQLL (102 aa). Phosphoserine is present on residues S232 and S265.

As to quaternary structure, component of the KNL1 complex composed of KNL1 and ZWINT. Part of the ten-subunit outer kinetochore KMN network that includes the KNL1, MIS12 and NDC80 complexes; a bioriented kinetochore contains approximately 150 copies of the network. Interacts with the MIS12 complex subunits MIS12 DSN1, and PMF1. Interacts with the NDC80 complex subunit NDC80 during mitosis. Interacts with ZW10. Interacts with CETN3. As to expression, expressed abundantly in brain and at lower levels in testis and kidney.

The protein localises to the nucleus. It localises to the chromosome. It is found in the centromere. The protein resides in the kinetochore. In terms of biological role, acts as a component of the outer kinetochore KNL1 complex that serves as a docking point for spindle assembly checkpoint components and mediates microtubule-kinetochore interactions. Kinetochores, consisting of a centromere-associated inner segment and a microtubule-contacting outer segment, play a crucial role in chromosome segregation by mediating the physical connection between centromeric DNA and spindle microtubules. The outer kinetochore is made up of the ten-subunit KMN network, comprising the MIS12, NDC80 and KNL1 complexes, and auxiliary microtubule-associated components; together they connect the outer kinetochore with the inner kinetochore, bind microtubules, and mediate interactions with mitotic checkpoint proteins that delay anaphase until chromosomes are bioriented on the spindle. Targets the RZZ complex to the kinetochore at prometaphase. Recruits MAD2L1 to the kinetochore, but is not required for BUB1B localization. In addition to orienting mitotic chromosomes, it is also essential for alignment of homologous chromosomes during meiotic metaphase I. In meiosis I, required to activate the spindle assembly checkpoint at unattached kinetochores to correct erroneous kinetochore-microtubule attachments. This chain is Outer kinetochore KNL1 complex subunit ZWINT (Zwint), found in Rattus norvegicus (Rat).